The sequence spans 80 residues: Cell division protein ZapB (80 aa).

A coiled-coil region spans residues 3–80; sequence FEVFEKLESK…ALLGKMEDVQ (78 aa).

This sequence belongs to the ZapB family. In terms of assembly, homodimer. The ends of the coiled-coil dimer bind to each other, forming polymers. Interacts with FtsZ.

It is found in the cytoplasm. Its function is as follows. Non-essential, abundant cell division factor that is required for proper Z-ring formation. It is recruited early to the divisome by direct interaction with FtsZ, stimulating Z-ring assembly and thereby promoting cell division earlier in the cell cycle. Its recruitment to the Z-ring requires functional FtsA or ZipA. This is Cell division protein ZapB from Proteus mirabilis (strain HI4320).